Here is a 215-residue protein sequence, read N- to C-terminus: Probable transaldolase 1 (215 aa).

Lys-83 (schiff-base intermediate with substrate) is an active-site residue.

It belongs to the transaldolase family. Type 3B subfamily.

The protein localises to the cytoplasm. The enzyme catalyses D-sedoheptulose 7-phosphate + D-glyceraldehyde 3-phosphate = D-erythrose 4-phosphate + beta-D-fructose 6-phosphate. It functions in the pathway carbohydrate degradation; pentose phosphate pathway; D-glyceraldehyde 3-phosphate and beta-D-fructose 6-phosphate from D-ribose 5-phosphate and D-xylulose 5-phosphate (non-oxidative stage): step 2/3. Its function is as follows. Transaldolase is important for the balance of metabolites in the pentose-phosphate pathway. The sequence is that of Probable transaldolase 1 from Bacillus cereus (strain ATCC 14579 / DSM 31 / CCUG 7414 / JCM 2152 / NBRC 15305 / NCIMB 9373 / NCTC 2599 / NRRL B-3711).